Consider the following 70-residue polypeptide: ATP synthase subunit c (70 aa).

The next 2 membrane-spanning stretches (helical) occupy residues 4–24 (IAAAIAIGLGALGAGIGNGLI) and 45–65 (LMFIGVALVEALPIIAVVIAF).

The protein belongs to the ATPase C chain family. F-type ATPases have 2 components, F(1) - the catalytic core - and F(0) - the membrane proton channel. F(1) has five subunits: alpha(3), beta(3), gamma(1), delta(1), epsilon(1). F(0) has three main subunits: a(1), b(2) and c(10-14). The alpha and beta chains form an alternating ring which encloses part of the gamma chain. F(1) is attached to F(0) by a central stalk formed by the gamma and epsilon chains, while a peripheral stalk is formed by the delta and b chains.

The protein localises to the cell membrane. Functionally, f(1)F(0) ATP synthase produces ATP from ADP in the presence of a proton or sodium gradient. F-type ATPases consist of two structural domains, F(1) containing the extramembraneous catalytic core and F(0) containing the membrane proton channel, linked together by a central stalk and a peripheral stalk. During catalysis, ATP synthesis in the catalytic domain of F(1) is coupled via a rotary mechanism of the central stalk subunits to proton translocation. The polypeptide is ATP synthase subunit c (Bacillus pumilus (strain SAFR-032)).